A 176-amino-acid polypeptide reads, in one-letter code: Inorganic pyrophosphatase (176 aa).

Substrate-binding residues include Lys30, Arg44, and Tyr56. Residues Asp66, Asp71, and Asp103 each contribute to the Mg(2+) site. Tyr142 provides a ligand contact to substrate.

This sequence belongs to the PPase family. As to quaternary structure, homohexamer. Requires Mg(2+) as cofactor.

The protein resides in the cytoplasm. It carries out the reaction diphosphate + H2O = 2 phosphate + H(+). In terms of biological role, catalyzes the hydrolysis of inorganic pyrophosphate (PPi) forming two phosphate ions. The protein is Inorganic pyrophosphatase of Aeropyrum pernix (strain ATCC 700893 / DSM 11879 / JCM 9820 / NBRC 100138 / K1).